Here is a 385-residue protein sequence, read N- to C-terminus: Glucans biosynthesis protein C (385 aa).

Helical transmembrane passes span 17 to 37 (AWLMLLGIPFHISLIYSSHTW), 60 to 80 (MQVFFVISGYFSYMLFLRYPL), 91 to 111 (VGIPMLTAIPLLTLPQFIMLQ), 137 to 157 (ISHLWFLLVLVVMTTLCVWIF), 173 to 193 (KFSMVKLSVIFLCLGIGYAVI), 212 to 232 (FIVMQTLFYLPFFILGALAFI), 239 to 259 (LFTTPSRGCTLAAALAFVAYL), 274 to 294 (TESVITMVLGLWMVNVVFSFG), 311 to 331 (ASLFIYLVHHPLTLFFGAYIT), and 338 to 358 (WLGFLCGLIFVVGIAIILYEI).

The protein belongs to the acyltransferase 3 family. OpgC subfamily.

The protein resides in the cell membrane. Its pathway is glycan metabolism; osmoregulated periplasmic glucan (OPG) biosynthesis. Necessary for the succinyl substitution of periplasmic glucans. Could catalyze the transfer of succinyl residues from the cytoplasmic side of the membrane to the nascent glucan backbones on the periplasmic side of the membrane. The chain is Glucans biosynthesis protein C from Escherichia coli (strain K12 / MC4100 / BW2952).